The chain runs to 256 residues: Type III pantothenate kinase (256 aa).

ATP is bound at residue 6–13 (DIGNTNIV). 107–110 (GADI) contacts substrate. Asp-109 (proton acceptor) is an active-site residue. K(+) is bound at residue Asp-129. An ATP-binding site is contributed by Thr-132. A substrate-binding site is contributed by Thr-184.

This sequence belongs to the type III pantothenate kinase family. Homodimer. Requires NH4(+) as cofactor. It depends on K(+) as a cofactor.

It localises to the cytoplasm. It catalyses the reaction (R)-pantothenate + ATP = (R)-4'-phosphopantothenate + ADP + H(+). It functions in the pathway cofactor biosynthesis; coenzyme A biosynthesis; CoA from (R)-pantothenate: step 1/5. In terms of biological role, catalyzes the phosphorylation of pantothenate (Pan), the first step in CoA biosynthesis. The protein is Type III pantothenate kinase of Bifidobacterium longum (strain DJO10A).